We begin with the raw amino-acid sequence, 83 residues long: Small ribosomal subunit protein uS17 (83 aa).

The protein belongs to the universal ribosomal protein uS17 family. In terms of assembly, part of the 30S ribosomal subunit.

Functionally, one of the primary rRNA binding proteins, it binds specifically to the 5'-end of 16S ribosomal RNA. This is Small ribosomal subunit protein uS17 from Zymomonas mobilis subsp. mobilis (strain ATCC 31821 / ZM4 / CP4).